A 391-amino-acid chain; its full sequence is Na(+)/H(+) antiporter NhaA (391 aa).

11 consecutive transmembrane segments (helical) span residues 14-34 (GGII…LGAT), 59-79 (MLLW…GLEV), 95-115 (AFPV…YLAF), 125-145 (GWAI…ALLG), 154-174 (IFLM…IALF), 180-200 (SILS…LNIF), 219-239 (VLKS…FIPL), 254-274 (VLHP…NAGV), 292-312 (IIAG…WLAL), 328-348 (IMAV…ISTL), and 357-377 (LIVW…FVGY).

This sequence belongs to the NhaA Na(+)/H(+) (TC 2.A.33) antiporter family.

It is found in the cell inner membrane. It carries out the reaction Na(+)(in) + 2 H(+)(out) = Na(+)(out) + 2 H(+)(in). Its function is as follows. Na(+)/H(+) antiporter that extrudes sodium in exchange for external protons. In Enterobacter sp. (strain 638), this protein is Na(+)/H(+) antiporter NhaA.